Consider the following 95-residue polypeptide: Ascorbate-specific PTS system EIIB component (95 aa).

A PTS EIIB type-2 domain is found at 1–95 (MENKNLHIIA…EIKQALSKVL (95 aa)). The active-site Phosphocysteine intermediate is C12. The residue at position 12 (C12) is a Phosphocysteine.

The protein localises to the cytoplasm. The catalysed reaction is N(pros)-phospho-L-histidyl-[protein] + L-ascorbate(out) = L-ascorbate 6-phosphate(in) + L-histidyl-[protein]. In terms of biological role, the phosphoenolpyruvate-dependent sugar phosphotransferase system (sugar PTS), a major carbohydrate active transport system, catalyzes the phosphorylation of incoming sugar substrates concomitantly with their translocation across the cell membrane. The enzyme II UlaABC PTS system is involved in ascorbate transport. The polypeptide is Ascorbate-specific PTS system EIIB component (ulaB) (Mycoplasma pneumoniae (strain ATCC 29342 / M129 / Subtype 1) (Mycoplasmoides pneumoniae)).